We begin with the raw amino-acid sequence, 185 residues long: MNQYNVKYLAKILCLKTEIARDPYAVINRNVLLRYTTDIEYNDLVTLITVRHKIDSMKTVFQVFNESSINYTPVDDDYGEPIIITSYLQKGHNKFPVNFLYIDVVISDLFPSFVRLDTTETNIVNSVLQTGDGKKTLRLPKMLETEIVVKILYRPNIPLKIVRFFRNNMVTGVEIADRSVISVAD.

Belongs to the poxviridae DNA-directed RNA polymerase 22 kDa subunit family. As to quaternary structure, the DNA-dependent RNA polymerase used for intermediate and late genes expression consists of eight subunits Rpo30/OPG66, Rpo7/OPG90, Rpo22/OPG103, Rpo147/OPG105, Rpo18/OPG119, Rpo19/OPG131, Rpo132/OPG151 and Rpo35/OPG156. The same holoenzyme, with the addition of the transcription-specificity factor OPG109, is used for early gene expression.

The protein resides in the virion. It carries out the reaction RNA(n) + a ribonucleoside 5'-triphosphate = RNA(n+1) + diphosphate. Functionally, part of the DNA-dependent RNA polymerase which catalyzes the transcription of viral DNA into RNA using the four ribonucleoside triphosphates as substrates. Responsible for the transcription of early, intermediate and late genes. DNA-dependent RNA polymerase associates with the early transcription factor (ETF), itself composed of OPG118 and OPG133, thereby allowing the early genes transcription. Late transcription, and probably also intermediate transcription, require newly synthesized RNA polymerase. The sequence is that of DNA-directed RNA polymerase 22 kDa subunit (OPG103) from Cynomys gunnisoni (Gunnison's prairie dog).